Here is a 1305-residue protein sequence, read N- to C-terminus: Contactin-associated protein like 5-3 (1305 aa).

The N-terminal stretch at 1 to 24 (MDSVPRLNSVFTLVLSGLWHFGLT) is a signal peptide. Residues 25–174 (ATNYNCDDPL…IGMRVEVYGC (150 aa)) form the F5/8 type C domain. Residues 25-1235 (ATNYNCDDPL…EPLTNAVPSD (1211 aa)) are Extracellular-facing. 2 Laminin G-like domains span residues 180-360 (VADF…TFSC) and 367-544 (PITF…IDLC). An N-linked (GlcNAc...) asparagine glycan is attached at N282. C329 and C360 are oxidised to a cystine. N-linked (GlcNAc...) asparagine glycosylation is present at N496. 3 disulfide bridges follow: C512–C544, C550–C561, and C555–C570. An EGF-like 1 domain is found at 546-583 (IKDRCLPNYCEHGGQCAQTWTNFYCNCSDTGYTGATCH). Residue N571 is glycosylated (N-linked (GlcNAc...) asparagine). A disulfide bridge connects residues C572 and C582. The Fibrinogen C-terminal domain maps to 584–790 (DSIYEQSCEV…LRCYGDRHFW (207 aa)). Residues 791-956 (NAVSFSTEAS…KVTSGVRPGC (166 aa)) enclose the Laminin G-like 3 domain. Intrachain disulfides connect C929–C956, C960–C973, C967–C982, and C984–C994. One can recognise an EGF-like 2 domain in the interval 957–995 (PGHCSSYGRNCQNGGKCVEKHIGYSCDCTNSPYEGPFCQ). The region spanning 1013 to 1198 (QEPYSVTKNT…VQRTLTESSC (186 aa)) is the Laminin G-like 4 domain. 2 N-linked (GlcNAc...) asparagine glycosylation sites follow: N1023 and N1057. C1163 and C1198 are oxidised to a cystine. The helical transmembrane segment at 1236-1256 (LAVIGGIIAVVTFISFSVIGI) threads the bilayer. The Cytoplasmic segment spans residues 1257–1305 (MTHFFYQHKRSHYASQMKEKEYPENVDSSSRNDIDLQNTTRECKQEDFI).

Belongs to the neurexin family. In terms of tissue distribution, expressed in brain.

The protein localises to the membrane. May play a role in the correct development and proper functioning of the peripheral and central nervous system and be involved in cell adhesion and intercellular communication. The polypeptide is Contactin-associated protein like 5-3 (Cntnap5c) (Mus musculus (Mouse)).